A 440-amino-acid polypeptide reads, in one-letter code: Thymidine phosphorylase (440 aa).

Belongs to the thymidine/pyrimidine-nucleoside phosphorylase family. As to quaternary structure, homodimer.

It catalyses the reaction thymidine + phosphate = 2-deoxy-alpha-D-ribose 1-phosphate + thymine. The protein operates within pyrimidine metabolism; dTMP biosynthesis via salvage pathway; dTMP from thymine: step 1/2. The enzymes which catalyze the reversible phosphorolysis of pyrimidine nucleosides are involved in the degradation of these compounds and in their utilization as carbon and energy sources, or in the rescue of pyrimidine bases for nucleotide synthesis. The sequence is that of Thymidine phosphorylase from Salmonella schwarzengrund (strain CVM19633).